The following is a 311-amino-acid chain: Metal-staphylopine import system permease protein CntB (311 aa).

6 consecutive transmembrane segments (helical) span residues 9-29 (IALMFPLMIVVSFMTFLLTYI), 105-125 (LTIISSVMVMITSIILGVVSA), 139-159 (VAFFLTALPSYWIASILIIYV), 173-193 (GPESYILPVIVITIAYAGIYF), 237-257 (IFCMSIPMIMGGLVVIEYIFA), and 274-294 (FPVIQAYVLIVAVLFIVFNTL). Positions 99–295 (FMNTLKLTII…VLFIVFNTLA (197 aa)) constitute an ABC transmembrane type-1 domain.

The protein belongs to the binding-protein-dependent transport system permease family. In terms of assembly, the complex is composed of two ATP-binding proteins (CntD and CntF), two transmembrane proteins (CntB and CntC) and a solute-binding protein (CntA).

Its subcellular location is the cell membrane. With respect to regulation, nickel/cobalt import is reduced in the presence of zinc. Functionally, part of the ABC transporter complex CntABCDF (Opp1) involved in the uptake of metal in complex with the metallophore staphylopine (StP). Involved in the import of divalent metals ions such as nickel, cobalt and zinc. Probably responsible for the translocation of the substrate across the membrane. Plays a major role in nickel/cobalt import in zinc-depleted conditions. Contributes to virulence. Required for full urease activity in vitro. The protein is Metal-staphylopine import system permease protein CntB of Staphylococcus aureus (strain NCTC 8325 / PS 47).